Consider the following 253-residue polypeptide: CD151 antigen (253 aa).

Topologically, residues 1 to 18 (MGEFNEKKATCGTVCLKY) are cytoplasmic. S-palmitoyl cysteine attachment occurs at residues cysteine 11 and cysteine 15. The chain crosses the membrane as a helical span at residues 19-39 (LLFTYNCCFWLAGLAVMAVGI). Residues 40–57 (WTLALKSDYISLLASSTY) lie on the Extracellular side of the membrane. Residues 58–78 (LATAYILVVAGVVVMVTGVLG) form a helical membrane-spanning segment. Residues 79–91 (CCATFKERRNLLR) are Cytoplasmic-facing. The helical transmembrane segment at 92-112 (LYFILLLIIFLLEIIAGILAY) threads the bilayer. Over 113 to 221 (VYYQQLNTEL…LETFIQEHLR (109 aa)) the chain is Extracellular. An N-linked (GlcNAc...) asparagine glycan is attached at asparagine 159. Residues 222–242 (VIGAVGIGIACVQVFGMIFTC) traverse the membrane as a helical segment. S-palmitoyl cysteine attachment occurs at residues cysteine 242 and cysteine 243. At 243 to 253 (CLYRSLKLEHY) the chain is on the cytoplasmic side.

Belongs to the tetraspanin (TM4SF) family. As to quaternary structure, interacts with integrins ITGA3:ITGB1, ITGA5:ITGB1, ITGA3:ITGB1 and ITGA6:ITGB4 and with CD9 and CD181. Interacts (via the second extracellular domain) with integrin ITGAV:ITGB3. Interacts with ITGA3; this interaction modulates ITGA3 glycosylation pattern. Interacts with F11R. Interacts with RAC1 and CDC42; these interactions mediate physical association of RAC1 and CDC42 with integrin adhesion receptor complexes. In terms of processing, palmitoylated. Palmitoylation by ZDHHC2 regulates CD151 expression, association with other tetraspanin family proteins and function in cell adhesion. Ubiquitinated by RNF128 on lysine residues present in the tetraspanin amino terminus via 'Lys-48'-linked ubiquitin leading to proteasomal degradation.

It is found in the cell membrane. Structural component of specialized membrane microdomains known as tetraspanin-enriched microdomains (TERMs), which act as platforms for receptor clustering and signaling. Plays a role in various cellular and molecular mechanism through its association with both integrin and non-integrin proteins. These interactions facilitate critical cellular functions, including cell-to-cell communication, wound healing, platelet aggregation, trafficking, cell motility, and angiogenesis. Via interaction with JAM-A/F11R and integrin ITGA3:ITGB1, promotes the recruitment of signaling molecules such as RAC1, CDC42 and RhoGTPases to facilitate the polarization of epithelial cells and the reorganization of the actin cytoskeleton, which are critical steps in cell migration process. Regulates the glycosylation pattern of ITGA3:ITGB1 thereby modulating its activity. Plays an essential role in the maintenance of central laminin-binding integrin ITGA6:ITGB4-containing adhesion complexes. Essential for the proper assembly of the glomerular and tubular basement membranes in kidney. Contributes to T-cell activation by modulating integrin signaling leading to activation of downstream targets PTK2 and MAPK1/MAPK3. The chain is CD151 antigen (Cd151) from Mus musculus (Mouse).